The sequence spans 235 residues: Small ribosomal subunit protein uS2 (235 aa).

This sequence belongs to the universal ribosomal protein uS2 family.

The sequence is that of Small ribosomal subunit protein uS2 from Thermoanaerobacter sp. (strain X514).